The chain runs to 319 residues: Beta-xylosidase (319 aa).

Residue Asp14 is the Proton acceptor of the active site. Glu222 (proton donor) is an active-site residue.

This sequence belongs to the glycosyl hydrolase 43 family.

It carries out the reaction Hydrolysis of (1-&gt;4)-beta-D-xylans, to remove successive D-xylose residues from the non-reducing termini.. Its function is as follows. Exoxylanase capable of acting on certain xylans and xylooligosaccharides. The chain is Beta-xylosidase (xynB) from Xylanibacter ruminicola (Prevotella ruminicola).